We begin with the raw amino-acid sequence, 137 residues long: uncharacterized protein (137 aa).

The interval 116–137 (ARPPRGSGGTRTARNGARTASE) is disordered. Residues 125–137 (TRTARNGARTASE) show a composition bias toward polar residues.

This is an uncharacterized protein from Mycobacterium bovis (strain ATCC BAA-935 / AF2122/97).